A 360-amino-acid polypeptide reads, in one-letter code: Phenylalanine--tRNA ligase alpha subunit (360 aa).

E260 lines the Mg(2+) pocket.

It belongs to the class-II aminoacyl-tRNA synthetase family. Phe-tRNA synthetase alpha subunit type 1 subfamily. Tetramer of two alpha and two beta subunits. It depends on Mg(2+) as a cofactor.

Its subcellular location is the cytoplasm. It catalyses the reaction tRNA(Phe) + L-phenylalanine + ATP = L-phenylalanyl-tRNA(Phe) + AMP + diphosphate + H(+). The protein is Phenylalanine--tRNA ligase alpha subunit of Paracoccus denitrificans (strain Pd 1222).